The chain runs to 218 residues: MKTYLSIYYLIQFCGHSWIFTNMTTRFLFFGQDAFADTFYSIGLVMQGCQLLSILELAHILLGVEQNGFLPMFLQVAERFIILFVVITSQEEVQSKYIVCALFFIWNLWDVIRYPYDMLAAVDTDYSALTWLRHTWWIVAYPLSVLAEAYTIYESLPYFESLGTYSFKMALPVSLSFHFPYILTLYLVLQPVGMLYICSCLWSERKQYFQRKLKLKKN.

Topologically, residues 1 to 6 (MKTYLS) are cytoplasmic. A helical membrane pass occupies residues 7–29 (IYYLIQFCGHSWIFTNMTTRFLF). The Lumenal portion of the chain corresponds to 30 to 38 (FGQDAFADT). A helical transmembrane segment spans residues 39–61 (FYSIGLVMQGCQLLSILELAHIL). The Cytoplasmic portion of the chain corresponds to 62 to 67 (LGVEQN). The chain crosses the membrane as a helical span at residues 68–87 (GFLPMFLQVAERFIILFVVI). Topologically, residues 88 to 96 (TSQEEVQSK) are lumenal. A helical transmembrane segment spans residues 97–116 (YIVCALFFIWNLWDVIRYPY). Topologically, residues 117–136 (DMLAAVDTDYSALTWLRHTW) are cytoplasmic. A helical membrane pass occupies residues 137 to 159 (WIVAYPLSVLAEAYTIYESLPYF). Active-site residues include tyrosine 141 and glutamate 148. At 160 to 178 (ESLGTYSFKMALPVSLSFH) the chain is on the lumenal side. A helical transmembrane segment spans residues 179 to 201 (FPYILTLYLVLQPVGMLYICSCL). The Cytoplasmic portion of the chain corresponds to 202-218 (WSERKQYFQRKLKLKKN).

The protein belongs to the very long-chain fatty acids dehydratase HACD family.

The protein localises to the endoplasmic reticulum membrane. It carries out the reaction a very-long-chain (3R)-3-hydroxyacyl-CoA = a very-long-chain (2E)-enoyl-CoA + H2O. The catalysed reaction is (3R)-hydroxyhexadecanoyl-CoA = (2E)-hexadecenoyl-CoA + H2O. It participates in lipid metabolism; fatty acid biosynthesis. In terms of biological role, catalyzes the third of the four reactions of the long-chain fatty acids elongation cycle. This endoplasmic reticulum-bound enzymatic process, allows the addition of two carbons to the chain of long- and very long-chain fatty acids/VLCFAs per cycle. This enzyme catalyzes the dehydration of the 3-hydroxyacyl-CoA intermediate into trans-2,3-enoyl-CoA, within each cycle of fatty acid elongation. Thereby, it participates in the production of VLCFAs of different chain lengths that are involved in multiple biological processes as precursors of membrane lipids and lipid mediators. The protein is Very-long-chain (3R)-3-hydroxyacyl-CoA dehydratase of Xenopus laevis (African clawed frog).